Consider the following 1604-residue polypeptide: Transposon Ty1-DR4 Gag-Pol polyprotein (1604 aa).

3 stretches are compositionally biased toward polar residues: residues 1-23, 48-60, and 127-152; these read MESQ…SVTS, TKAN…TPAS, and QSQF…GNTF. Disordered stretches follow at residues 1–93, 126–174, and 352–421; these read MESQ…MMTQ, PQSQ…PPPM, and GSRN…SKST. Residues 153–165 are compositionally biased toward low complexity; it reads TDSSSADSDMTST. The interval 299 to 401 is RNA-binding; that stretch reads NNGIHINNKV…NSKSKTARAH (103 aa). Over residues 402 to 418 the composition is skewed to low complexity; it reads NVSTSNNSPSTDNDSIS. Position 416 is a phosphoserine (Ser416). Residue Asp461 is the For protease activity; shared with dimeric partner of the active site. Residues 583–640 are integrase-type zinc finger-like; that stretch reads NVHTSESTRKYPYPFIHRMLAHANAQTIRYSLKNNTITYFNESDVDWSSAIDYQCPDC. In terms of domain architecture, Integrase catalytic spans 660-835; it reads NSYEPFQYLH…AGLDISTLLP (176 aa). Mg(2+)-binding residues include Asp671 and Asp736. Disordered stretches follow at residues 956–1087, 1092–1111, and 1130–1187; these read SKAV…ETEK, RSPS…NIVP, and DLPL…DNET. The span at 960-969 shows a compositional bias: low complexity; it reads SPTDSTPPST. Residues 1005 to 1015 show a composition bias toward polar residues; sequence STPQISNIEST. Over residues 1038–1053 the composition is skewed to basic and acidic residues; the sequence is ESSHASKSKDFRHSDS. Polar residues-rich tracts occupy residues 1054-1082 and 1101-1111; these read YSEN…QISD and PENNSSHNIVP. Residues 1178–1212 carry the Bipartite nuclear localization signal motif; it reads KKRSLEDNETEIKVSRDTWNTKNMRSLEPPRSKKR. Positions 1338 to 1476 constitute a Reverse transcriptase Ty1/copia-type domain; that stretch reads NNYYITQLDI…DILGLEIKYQ (139 aa). Residues Asp1346, Asp1427, and Asp1428 each coordinate Mg(2+).

The capsid protein forms a homotrimer, from which the VLPs are assembled. The protease is a homodimer, whose active site consists of two apposed aspartic acid residues. Post-translationally, initially, virus-like particles (VLPs) are composed of the structural unprocessed proteins Gag and Gag-Pol, and also contain the host initiator methionine tRNA (tRNA(i)-Met) which serves as a primer for minus-strand DNA synthesis, and a dimer of genomic Ty RNA. Processing of the polyproteins occurs within the particle and proceeds by an ordered pathway, called maturation. First, the protease (PR) is released by autocatalytic cleavage of the Gag-Pol polyprotein yielding capsid protein p45 and a Pol-p154 precursor protein. This cleavage is a prerequisite for subsequent processing of Pol-p154 at the remaining sites to release the mature structural and catalytic proteins. Maturation takes place prior to the RT reaction and is required to produce transposition-competent VLPs.

It localises to the cytoplasm. The protein resides in the nucleus. The enzyme catalyses DNA(n) + a 2'-deoxyribonucleoside 5'-triphosphate = DNA(n+1) + diphosphate. The catalysed reaction is Endonucleolytic cleavage to 5'-phosphomonoester.. Capsid protein (CA) is the structural component of the virus-like particle (VLP), forming the shell that encapsulates the retrotransposons dimeric RNA genome. The particles are assembled from trimer-clustered units and there are holes in the capsid shells that allow for the diffusion of macromolecules. CA also has nucleocapsid-like chaperone activity, promoting primer tRNA(i)-Met annealing to the multipartite primer-binding site (PBS), dimerization of Ty1 RNA and initiation of reverse transcription. Its function is as follows. The aspartyl protease (PR) mediates the proteolytic cleavages of the Gag and Gag-Pol polyproteins after assembly of the VLP. In terms of biological role, reverse transcriptase/ribonuclease H (RT) is a multifunctional enzyme that catalyzes the conversion of the retro-elements RNA genome into dsDNA within the VLP. The enzyme displays a DNA polymerase activity that can copy either DNA or RNA templates, and a ribonuclease H (RNase H) activity that cleaves the RNA strand of RNA-DNA heteroduplexes during plus-strand synthesis and hydrolyzes RNA primers. The conversion leads to a linear dsDNA copy of the retrotransposon that includes long terminal repeats (LTRs) at both ends. Functionally, integrase (IN) targets the VLP to the nucleus, where a subparticle preintegration complex (PIC) containing at least integrase and the newly synthesized dsDNA copy of the retrotransposon must transit the nuclear membrane. Once in the nucleus, integrase performs the integration of the dsDNA into the host genome. This Saccharomyces cerevisiae (strain ATCC 204508 / S288c) (Baker's yeast) protein is Transposon Ty1-DR4 Gag-Pol polyprotein (TY1B-DR4).